The chain runs to 187 residues: MAESHGGAKGPAAGAHTGAEGGHGGGFPPFESSTYASQLVSLAIFFVVLYVIVSKLALPKVGGAIEARQNKIEGDLAEAQTLRDQSDAALKAYESELASARSRAQAIGNESRDKANAQAETERKALEEQLAAKLAGAEKTIASTRTAAMSNVRGIAADAAGQIVQQLTGVVPDAASVNAAVDASLKG.

The segment at 1-25 (MAESHGGAKGPAAGAHTGAEGGHGG) is disordered. The helical transmembrane segment at 39–59 (LVSLAIFFVVLYVIVSKLALP) threads the bilayer. The segment at 103-122 (RAQAIGNESRDKANAQAETE) is disordered. Over residues 110–122 (ESRDKANAQAETE) the composition is skewed to basic and acidic residues.

It belongs to the ATPase B chain family. As to quaternary structure, F-type ATPases have 2 components, F(1) - the catalytic core - and F(0) - the membrane proton channel. F(1) has five subunits: alpha(3), beta(3), gamma(1), delta(1), epsilon(1). F(0) has three main subunits: a(1), b(2) and c(10-14). The alpha and beta chains form an alternating ring which encloses part of the gamma chain. F(1) is attached to F(0) by a central stalk formed by the gamma and epsilon chains, while a peripheral stalk is formed by the delta and b chains.

Its subcellular location is the cell inner membrane. In terms of biological role, f(1)F(0) ATP synthase produces ATP from ADP in the presence of a proton or sodium gradient. F-type ATPases consist of two structural domains, F(1) containing the extramembraneous catalytic core and F(0) containing the membrane proton channel, linked together by a central stalk and a peripheral stalk. During catalysis, ATP synthesis in the catalytic domain of F(1) is coupled via a rotary mechanism of the central stalk subunits to proton translocation. Component of the F(0) channel, it forms part of the peripheral stalk, linking F(1) to F(0). The b'-subunit is a diverged and duplicated form of b found in plants and photosynthetic bacteria. This chain is ATP synthase subunit b 2 (atpF2), found in Bradyrhizobium diazoefficiens (strain JCM 10833 / BCRC 13528 / IAM 13628 / NBRC 14792 / USDA 110).